We begin with the raw amino-acid sequence, 328 residues long: Methionyl-tRNA formyltransferase (328 aa).

121-124 lines the (6S)-5,6,7,8-tetrahydrofolate pocket; it reads SLLP.

This sequence belongs to the Fmt family.

The enzyme catalyses L-methionyl-tRNA(fMet) + (6R)-10-formyltetrahydrofolate = N-formyl-L-methionyl-tRNA(fMet) + (6S)-5,6,7,8-tetrahydrofolate + H(+). Attaches a formyl group to the free amino group of methionyl-tRNA(fMet). The formyl group appears to play a dual role in the initiator identity of N-formylmethionyl-tRNA by promoting its recognition by IF2 and preventing the misappropriation of this tRNA by the elongation apparatus. This Burkholderia thailandensis (strain ATCC 700388 / DSM 13276 / CCUG 48851 / CIP 106301 / E264) protein is Methionyl-tRNA formyltransferase.